Reading from the N-terminus, the 252-residue chain is Probable transcriptional regulatory protein TW504 (252 aa).

The protein belongs to the TACO1 family.

It is found in the cytoplasm. This Tropheryma whipplei (strain TW08/27) (Whipple's bacillus) protein is Probable transcriptional regulatory protein TW504.